Reading from the N-terminus, the 84-residue chain is Small ribosomal subunit protein bS18B (84 aa).

Over residues 1–10 (MAVKRAPSKK) the composition is skewed to basic residues. The segment at 1-20 (MAVKRAPSKKVRAEQARRPK) is disordered.

It belongs to the bacterial ribosomal protein bS18 family. In terms of assembly, part of the 30S ribosomal subunit. Forms a tight heterodimer with protein bS6.

Functionally, binds as a heterodimer with protein bS6 to the central domain of the 16S rRNA, where it helps stabilize the platform of the 30S subunit. The polypeptide is Small ribosomal subunit protein bS18B (Nocardia farcinica (strain IFM 10152)).